A 301-amino-acid polypeptide reads, in one-letter code: MANLRDIRKKIGSVKNTQKITHAMKLVSTSKLRKAEEVARNSRAYALKLDAVFDDVLSKMKNQGIEDIQSKYFRELERLEIKKVDIIFITADKGLCGGFNTNTIKKVLACTNEYKEKDIKVRLCGIGKKGNEYFSFNGIEVLDKINNLSSMPNYERAQEFMKKVVEDYLSGKTDKVIIIHNGFKNMISQEIRVKTILPIGYKIIHQNPQPNEAQETITSEPSGSEDEILDSLAEKYVEYSLYYALIDSLAAEHSARMQAMDTATNNAKDLVKTLTISYNKARQEAITTELVEINAGVEALK.

This sequence belongs to the ATPase gamma chain family. F-type ATPases have 2 components, CF(1) - the catalytic core - and CF(0) - the membrane proton channel. CF(1) has five subunits: alpha(3), beta(3), gamma(1), delta(1), epsilon(1). CF(0) has three main subunits: a, b and c.

Its subcellular location is the cell inner membrane. Its function is as follows. Produces ATP from ADP in the presence of a proton gradient across the membrane. The gamma chain is believed to be important in regulating ATPase activity and the flow of protons through the CF(0) complex. The protein is ATP synthase gamma chain of Helicobacter pylori (strain HPAG1).